Consider the following 238-residue polypeptide: MPCTHCRTPNGTSSSATWRTARPAPRRCGSCRPPPPGSASPSPRPRRASCATGCCGRSRPYARRLRRPADGHGPAGGGRTGRWYAYALAACVAAAAAFGGVAVWQNQVAQDARQQANQAQRQNERLAQVLSAPDAKTASSELTGGAHGTVVVSQSQNRAVFLASGMAPPPSGKVYQIWFNDEGTMRSAGLMDPKASDDAVLLNGPVDRASGMGITVEPAGGSAEPTSDPVALMNFPTA.

Disordered stretches follow at residues 1–51 (MPCT…ASCA) and 214–238 (ITVE…FPTA). Residues 16 to 31 (ATWRTARPAPRRCGSC) are compositionally biased toward low complexity.

This is an uncharacterized protein from Streptomyces griseus.